We begin with the raw amino-acid sequence, 539 residues long: Phosphoenolpyruvate carboxykinase (ATP) (539 aa).

Substrate contacts are provided by arginine 59, tyrosine 200, and lysine 206. ATP-binding positions include lysine 206, histidine 225, and 242–250; that span reads GLSGTGKTT. Mn(2+) contacts are provided by lysine 206 and histidine 225. Position 263 (aspartate 263) interacts with Mn(2+). ATP is bound by residues glutamate 291, arginine 327, 447–448, and threonine 453; that span reads RI. Arginine 327 is a binding site for substrate.

The protein belongs to the phosphoenolpyruvate carboxykinase (ATP) family. Requires Mn(2+) as cofactor.

It localises to the cytoplasm. It carries out the reaction oxaloacetate + ATP = phosphoenolpyruvate + ADP + CO2. Its pathway is carbohydrate biosynthesis; gluconeogenesis. In terms of biological role, involved in the gluconeogenesis. Catalyzes the conversion of oxaloacetate (OAA) to phosphoenolpyruvate (PEP) through direct phosphoryl transfer between the nucleoside triphosphate and OAA. In Selenomonas ruminantium, this protein is Phosphoenolpyruvate carboxykinase (ATP).